Consider the following 429-residue polypeptide: Adenylosuccinate synthetase (429 aa).

Residues 12-18 and 40-42 contribute to the GTP site; these read GDEGKGK and GHT. Catalysis depends on Asp-13, which acts as the Proton acceptor. Asp-13 and Gly-40 together coordinate Mg(2+). Residues 13-16, 38-41, Thr-129, Arg-143, Gln-223, Thr-238, and Arg-302 each bind IMP; these read DEGK and NAGH. His-41 functions as the Proton donor in the catalytic mechanism. Residue 298–304 coordinates substrate; the sequence is TVTGRQR. Residues Arg-304, 330 to 332, and 412 to 414 contribute to the GTP site; these read KID and STS.

The protein belongs to the adenylosuccinate synthetase family. In terms of assembly, homodimer. Requires Mg(2+) as cofactor.

It is found in the cytoplasm. It catalyses the reaction IMP + L-aspartate + GTP = N(6)-(1,2-dicarboxyethyl)-AMP + GDP + phosphate + 2 H(+). It functions in the pathway purine metabolism; AMP biosynthesis via de novo pathway; AMP from IMP: step 1/2. Plays an important role in the de novo pathway of purine nucleotide biosynthesis. Catalyzes the first committed step in the biosynthesis of AMP from IMP. This is Adenylosuccinate synthetase from Erythrobacter litoralis (strain HTCC2594).